A 540-amino-acid polypeptide reads, in one-letter code: MLO protein homolog 1 (540 aa).

Residues 1–16 (MAGGRSGSRELPETPT) lie on the Extracellular side of the membrane. Residues 17–37 (WAVAVVCAVLVLVSVAMEHGL) traverse the membrane as a helical segment. Residues 38–60 (HNLSHWFRRRQKKAMGDALDKIK) lie on the Cytoplasmic side of the membrane. A helical transmembrane segment spans residues 61 to 81 (AELMLLGFISLLLTVAQAPIS). Residues 82–142 (KICIPKSAAN…MSAKSMHQLH (61 aa)) lie on the Extracellular side of the membrane. The chain crosses the membrane as a helical span at residues 143–163 (IFIFVLAVFHVTYCVITMGLG). The Cytoplasmic segment spans residues 164–265 (RLKMKKWKKW…IKRSLEDDFK (102 aa)). A helical transmembrane segment spans residues 266–286 (VVVGISLPLWFVGILVLFLDI). H287 is a topological domain (extracellular). A helical transmembrane segment spans residues 288–308 (GLGTLIWISFVPLIIVLLVGT). Over 309-347 (KLEMVIMQMAQEIQDRATVIQGAPVVEPSNKYFWFNRPD) the chain is Cytoplasmic. The helical transmembrane segment at 348-368 (WVLFFIHLTLFHNAFQMAHFV) threads the bilayer. At 369-383 (WTMATPGLKKCFHEN) the chain is on the extracellular side. A helical transmembrane segment spans residues 384–404 (IWLSIVEVIVGISLQVLCSYI). The Cytoplasmic portion of the chain corresponds to 405–540 (TFPLYALVTQ…DSDFSFSAQR (136 aa)). The calmodulin-binding stretch occupies residues 426–447 (EQTMKALMNWRKKAMEKKKVRD). Residues 468-526 (ASPVHLLQDHRARSDDPPSPITVASPPAPEEDIYPVPAAAASRQLLDDPPDRRWMASSS) form a disordered region. Basic and acidic residues-rich tracts occupy residues 474 to 483 (LQDHRARSDD) and 512 to 521 (LLDDPPDRRW).

This sequence belongs to the MLO family.

The protein resides in the membrane. Functionally, may be involved in modulation of pathogen defense and leaf cell death. Activity seems to be regulated by Ca(2+)-dependent calmodulin binding and seems not to require heterotrimeric G proteins. This Oryza sativa subsp. japonica (Rice) protein is MLO protein homolog 1 (MLO1).